We begin with the raw amino-acid sequence, 252 residues long: Transcription factor bHLH117 (252 aa).

Residues 103-141 (LFPSLSPPLPAAKRQKLNSTSSSTTSGSPTASNDGGIIT) form a disordered region. Residues 121-134 (STSSSTTSGSPTAS) show a composition bias toward low complexity. The 50-residue stretch at 130-179 (SPTASNDGGIITKRRKISDKIRSLEKLMPWERKMNLAMTLEESHKYIKFL) folds into the bHLH domain.

Homodimer.

Its subcellular location is the nucleus. This is Transcription factor bHLH117 (BHLH117) from Arabidopsis thaliana (Mouse-ear cress).